An 84-amino-acid polypeptide reads, in one-letter code: Small ribosomal subunit protein uS17 (84 aa).

Belongs to the universal ribosomal protein uS17 family. Part of the 30S ribosomal subunit.

In terms of biological role, one of the primary rRNA binding proteins, it binds specifically to the 5'-end of 16S ribosomal RNA. This Histophilus somni (strain 129Pt) (Haemophilus somnus) protein is Small ribosomal subunit protein uS17.